The chain runs to 657 residues: Glycogen debranching enzyme (657 aa).

D336 serves as the catalytic Nucleophile. The active-site Proton donor is E371. Residues 458-467 (NEANGEENRD) show a composition bias toward basic and acidic residues. The tract at residues 458 to 479 (NEANGEENRDGTNNNYSNNHGK) is disordered.

The protein belongs to the glycosyl hydrolase 13 family.

The enzyme catalyses Hydrolysis of (1-&gt;6)-alpha-D-glucosidic linkages to branches with degrees of polymerization of three or four glucose residues in limit dextrin.. The protein operates within glycan degradation; glycogen degradation. Functionally, removes maltotriose and maltotetraose chains that are attached by 1,6-alpha-linkage to the limit dextrin main chain, generating a debranched limit dextrin. The sequence is that of Glycogen debranching enzyme from Shigella boydii serotype 18 (strain CDC 3083-94 / BS512).